Consider the following 622-residue polypeptide: Pesticidal crystal protein Cry2Ac (622 aa).

Belongs to the delta endotoxin family.

Promotes colloidosmotic lysis by binding to the midgut epithelial cells of lepidopteran larvae. Has low activity on dipteran larvae. In Bacillus thuringiensis, this protein is Pesticidal crystal protein Cry2Ac (cry2Ac).